Here is a 524-residue protein sequence, read N- to C-terminus: Probable plastidic glucose transporter 1 (524 aa).

Transmembrane regions (helical) follow at residues 88-108, 122-142, 151-171, 179-199, 208-228, 239-259, 320-340, 357-377, 386-406, 420-440, 452-472, and 483-503; these read MANF…VSIA, LVVS…GPLV, FQIF…AHSL, FLVG…ISEV, LGTL…LLGI, TMLY…QFAV, VAFI…NGVL, QASL…SYLI, LIGS…AVGF, GTLM…GLII, IMGF…LFFL, and VYAS…LFTV.

The protein belongs to the major facilitator superfamily. Sugar transporter (TC 2.A.1.1) family.

It is found in the plastid. It localises to the chloroplast membrane. Functionally, may be involved in the efflux of glucose towards the cytosol. This Arabidopsis thaliana (Mouse-ear cress) protein is Probable plastidic glucose transporter 1.